Reading from the N-terminus, the 218-residue chain is UPF0126 membrane protein SCO4104 (218 aa).

The next 7 membrane-spanning stretches (helical) occupy residues leucine 8–valine 28, glycine 37–isoleucine 57, alanine 64–valine 84, leucine 91–alanine 111, glycine 118–isoleucine 138, leucine 154–valine 174, and alanine 179–isoleucine 199.

The protein belongs to the UPF0126 family.

The protein resides in the cell membrane. This chain is UPF0126 membrane protein SCO4104, found in Streptomyces coelicolor (strain ATCC BAA-471 / A3(2) / M145).